The chain runs to 162 residues: Large ribosomal subunit protein eL24 (162 aa).

Disordered regions lie at residues 64–83 (DIHA…PYSR) and 117–162 (ERIK…GGKR). Positions 71–81 (KKRRRTTKKPY) are enriched in basic residues. Residues 117-135 (ERIKKTKDEKKAKKAEVTK) are compositionally biased toward basic and acidic residues.

The protein belongs to the eukaryotic ribosomal protein eL24 family.

Its subcellular location is the cytoplasm. This is Large ribosomal subunit protein eL24 (RPL24) from Hordeum vulgare (Barley).